The chain runs to 393 residues: Telomeric repeat-binding factor 2-interacting protein 1 (393 aa).

A2 is subject to N-acetylalanine. The region spanning 10–101 (DPNGPTHSST…EKLELEAYRL (92 aa)) is the BRCT domain. 2 positions are modified to phosphoserine: S36 and S43. Residues 104–132 (TEQASDPKPGASAEGSTEPEPQPLTGRIA) are disordered. K111 is covalently cross-linked (Glycyl lysine isopeptide (Lys-Gly) (interchain with G-Cter in SUMO2)). In terms of domain architecture, Myb-like spans 125-185 (QPLTGRIAYT…SLKDRYLKHL (61 aa)). S151 and S153 each carry phosphoserine. K191 participates in a covalent cross-link: Glycyl lysine isopeptide (Lys-Gly) (interchain with G-Cter in SUMO2). Disordered regions lie at residues 194 to 248 (LGNA…EADN) and 272 to 305 (HITM…TQEV). A phosphoserine mark is found at S200 and S203. Glycyl lysine isopeptide (Lys-Gly) (interchain with G-Cter in SUMO2) cross-links involve residues K205, K209, and K237. The span at 223-248 (QNKRTPDLPEEECVKGETKENGEADN) shows a compositional bias: basic and acidic residues. Acidic residues predominate over residues 282-297 (TPEEDSETQPDEEEEE). K366 participates in a covalent cross-link: Glycyl lysine isopeptide (Lys-Gly) (interchain with G-Cter in SUMO2). The short motif at 377–393 (KKYGAQNVARRIEFRKK) is the Nuclear localization signal element.

It belongs to the RAP1 family. As to quaternary structure, associates with the I-kappa-B-kinase (IKK) core complex, composed of CHUK, IKBKB and IKBKG. Homodimer. Component of the shelterin complex (telosome) composed of TERF1, TERF2, TINF2, TERF2IP ACD and POT1. Interacts with TERF2 (but not TERF1) with its C-terminus. Interacts with SLX4/BTBD12. Interacts with TERF2; the interaction is direct.

Its subcellular location is the nucleus. It localises to the cytoplasm. The protein localises to the chromosome. It is found in the telomere. Acts both as a regulator of telomere function and as a transcription regulator. Involved in the regulation of telomere length and protection as a component of the shelterin complex (telosome). In contrast to other components of the shelterin complex, it is dispensible for telomere capping and does not participate in the protection of telomeres against non-homologous end-joining (NHEJ)-mediated repair. Instead, it is required to negatively regulate telomere recombination and is essential for repressing homology-directed repair (HDR), which can affect telomere length. Does not bind DNA directly: recruited to telomeric double-stranded 5'-TTAGGG-3' repeats via its interaction with TERF2. Independently of its function in telomeres, also acts as a transcription regulator: recruited to extratelomeric 5'-TTAGGG-3' sites via its association with TERF2 or other factors, and regulates gene expression. When cytoplasmic, associates with the I-kappa-B-kinase (IKK) complex and acts as a regulator of the NF-kappa-B signaling by promoting IKK-mediated phosphorylation of RELA/p65, leading to activate expression of NF-kappa-B target genes. The chain is Telomeric repeat-binding factor 2-interacting protein 1 (Terf2ip) from Rattus norvegicus (Rat).